The following is a 220-amino-acid chain: Putative tyrosine-protein phosphatase 1 (220 aa).

In terms of domain architecture, Tyrosine-protein phosphatase spans 67-218; that stretch reads FKVPLNAELF…LLARKHVRGQ (152 aa).

The protein belongs to the protein-tyrosine phosphatase family. Non-receptor class CDC14 subfamily.

It catalyses the reaction O-phospho-L-tyrosyl-[protein] + H2O = L-tyrosyl-[protein] + phosphate. Its function is as follows. Could be inactive as the active site cysteine is modified to tryptophan. The chain is Putative tyrosine-protein phosphatase 1 (PTP-1) from Orgyia pseudotsugata multicapsid polyhedrosis virus (OpMNPV).